Reading from the N-terminus, the 70-residue chain is uncharacterized protein (70 aa).

Positions 5–59 constitute an HTH cro/C1-type domain; sequence IREFRAKYGMTQEELAKKVGVRRETIVFLEKGKYNPSLRLAYKIARVFNARIEDL. The segment at residues 16-35 is a DNA-binding region (H-T-H motif); that stretch reads QEELAKKVGVRRETIVFLEK.

This is an uncharacterized protein from Archaeoglobus fulgidus (strain ATCC 49558 / DSM 4304 / JCM 9628 / NBRC 100126 / VC-16).